Consider the following 455-residue polypeptide: Probable transcription factor GLK1 (455 aa).

Low complexity predominate over residues 145 to 163 (AAVEAKSSSPSSTTSSSQE). Positions 145–183 (AAVEAKSSSPSSTTSSSQEAESRHKSSSKSSHGKKKAKV) are disordered. A compositionally biased stretch (basic residues) spans 169–181 (KSSSKSSHGKKKA). An HTH myb-type domain is found at 177-236 (GKKKAKVDWTPELHRRFVQAVEQLGIDKAVPSRILEIMGIDSLTRHNIASHLQKYRSHRK). Residues 207–232 (PSRILEIMGIDSLTRHNIASHLQKYR) constitute a DNA-binding region (H-T-H motif).

In terms of tissue distribution, expressed in leaves.

It is found in the nucleus. In terms of biological role, probable transcriptional activator that promotes chloroplast development. Acts as an activator of nuclear photosynthetic genes involved in chlorophyll biosynthesis, light harvesting, and electron transport. The protein is Probable transcription factor GLK1 (GLK1) of Oryza sativa subsp. japonica (Rice).